A 145-amino-acid polypeptide reads, in one-letter code: Lymphocyte antigen 6 complex locus protein G5c (145 aa).

A signal peptide spans 1-38; the sequence is MSGLAASWSLKPLGPHGVTQALCAVLLAVLVTMNVVLG. A UPAR/Ly6 domain is found at 55–145; it reads LHCYRCLLET…NPKNRKNTMH (91 aa). Disulfide bonds link C57-C84, C60-C69, C76-C102, C111-C128, and C129-C134. N-linked (GlcNAc...) asparagine glycosylation occurs at N91.

In terms of assembly, forms oligomers. In terms of processing, N-glycosylated. Expression restricted to the caput of epididymis. Detected only from day 24 postnatum.

The protein localises to the secreted. Its function is as follows. May have a role in hematopoietic cell differentiation. In Rattus norvegicus (Rat), this protein is Lymphocyte antigen 6 complex locus protein G5c (Ly6g5c).